A 523-amino-acid polypeptide reads, in one-letter code: Mogroside I-A1 synthase (523 aa).

H39 functions as the Proton acceptor in the catalytic mechanism. D136 serves as the catalytic Charge relay. Positions 311, 374, 392, 393, 394, 397, 413, and 414 each coordinate UDP-alpha-D-glucose.

It belongs to the UDP-glycosyltransferase family. Highly expressed in young fruits 15 and 34 days after anthesis (15-DAA and 34-DAA).

The catalysed reaction is mogrol + UDP-alpha-D-glucose = mogroside I-A1 + UDP + H(+). The enzyme catalyses mogroside I-A1 + UDP-alpha-D-glucose = mogroside IIE + UDP + H(+). It catalyses the reaction mogroside IE + UDP-alpha-D-glucose = mogroside IIE + UDP + H(+). It carries out the reaction mogroside II-A1 + UDP-alpha-D-glucose = mogroside IIIX + UDP + H(+). The catalysed reaction is mogroside II-A + UDP-alpha-D-glucose = mogroside III + UDP + H(+). The enzyme catalyses mogroside IIE + UDP-alpha-D-glucose = mogroside III-C3(1-&gt;6) + UDP + H(+). It catalyses the reaction mogroside III + UDP-alpha-D-glucose = isomogroside IV + UDP + H(+). It carries out the reaction mogroside III + UDP-alpha-D-glucose = mogroside IV + UDP + H(+). The catalysed reaction is mogroside IIIX + UDP-alpha-D-glucose = mogroside IVA + UDP + H(+). The enzyme catalyses siamenoside I + UDP-alpha-D-glucose = isomogroside V + UDP + H(+). It participates in secondary metabolite biosynthesis; terpenoid biosynthesis. UDP-glycosyltransferase involved in the biosynthesis of cucurbitacin and mogroside tetracyclic triterpene natural products (e.g. siamenoside I and mogrosides IV, V and VI). Cucurbitacins have cytotoxic properties and exhibit deterrent taste as a defense barrier against herbivores. Mogrosides are nonsugar highly oxygenated compounds used as high-intensity zero-calorie sweeteners; they also possess pharmacological properties such as regulating immunity, lowering blood sugar and lipid levels, protecting the liver, and acting as antioxidants and antitumor agents. Catalyzes the C24 primary glucosylation of mogrol and mogroside I-E1, and the C3 primary glucosylation of mogroside I-A1, mogroside II-A1 and mogroside II-A. Also supports branching glucosylations of mogroside II-E, mogroside III, mogroside IIIx and siamenoside I. The sequence is that of Mogroside I-A1 synthase from Siraitia grosvenorii (Monk's fruit).